The sequence spans 134 residues: UPF0412 protein YaaI (134 aa).

Positions 1 to 23 (MKSVFTLSASLAISLLLCCTAQA) are cleaved as a signal peptide.

Belongs to the UPF0412 family.

The polypeptide is UPF0412 protein YaaI (Escherichia coli (strain SMS-3-5 / SECEC)).